Reading from the N-terminus, the 81-residue chain is Photosystem I iron-sulfur center (81 aa).

4Fe-4S ferredoxin-type domains lie at 2-31 and 39-68; these read AHTVKIYDNCIGCTQCVRACPLDVLEMVPW and MASAPRTEDCVGCKRCETACPTDFLSIRVY. [4Fe-4S] cluster-binding residues include C11, C14, C17, C21, C48, C51, C54, and C58.

As to quaternary structure, the eukaryotic PSI reaction center is composed of at least 11 subunits. The cofactor is [4Fe-4S] cluster.

The protein resides in the plastid. It is found in the chloroplast thylakoid membrane. It catalyses the reaction reduced [plastocyanin] + hnu + oxidized [2Fe-2S]-[ferredoxin] = oxidized [plastocyanin] + reduced [2Fe-2S]-[ferredoxin]. Its function is as follows. Apoprotein for the two 4Fe-4S centers FA and FB of photosystem I (PSI); essential for photochemical activity. FB is the terminal electron acceptor of PSI, donating electrons to ferredoxin. The C-terminus interacts with PsaA/B/D and helps assemble the protein into the PSI complex. Required for binding of PsaD and PsaE to PSI. PSI is a plastocyanin/cytochrome c6-ferredoxin oxidoreductase, converting photonic excitation into a charge separation, which transfers an electron from the donor P700 chlorophyll pair to the spectroscopically characterized acceptors A0, A1, FX, FA and FB in turn. The polypeptide is Photosystem I iron-sulfur center (Cyanidioschyzon merolae (strain NIES-3377 / 10D) (Unicellular red alga)).